A 233-amino-acid chain; its full sequence is C-type lectin domain family 2 member D6 (233 aa).

The interval 1–45 is disordered; it reads MPSSAHLQDSPPLLSRTLTQNEGQTSLRQSSSCGPSATSASESLS. The Cytoplasmic portion of the chain corresponds to 1 to 73; that stretch reads MPSSAHLQDS…GIILPESPAK (73 aa). Over residues 16–29 the composition is skewed to polar residues; the sequence is RTLTQNEGQTSLRQ. Residues 30–43 show a composition bias toward low complexity; sequence SSSCGPSATSASES. The chain crosses the membrane as a helical; Signal-anchor for type II membrane protein span at residues 74–94; the sequence is LLCCCAVIVVLSVAVVALSVA. Over 95 to 233 the chain is Extracellular; sequence LSVKKTPQIS…KLNSYTSQCQ (139 aa). In terms of domain architecture, C-type lectin spans 119-230; the sequence is VGNKCYYFNE…ICSKLNSYTS (112 aa). Asn-132 carries N-linked (GlcNAc...) asparagine glycosylation.

The protein resides in the cell membrane. Lectin-type cell surface receptor. The sequence is that of C-type lectin domain family 2 member D6 (Clec2d6) from Rattus norvegicus (Rat).